The sequence spans 270 residues: 4-hydroxy-tetrahydrodipicolinate reductase (270 aa).

NAD(+) contacts are provided by residues 11-16 (GAGGRM) and Glu37. Arg38 lines the NADP(+) pocket. NAD(+) is bound by residues 101–103 (GTT) and 125–128 (APNM). His158 acts as the Proton donor/acceptor in catalysis. (S)-2,3,4,5-tetrahydrodipicolinate is bound at residue His159. Lys162 acts as the Proton donor in catalysis. 168-169 (GT) is a (S)-2,3,4,5-tetrahydrodipicolinate binding site.

The protein belongs to the DapB family.

It is found in the cytoplasm. It catalyses the reaction (S)-2,3,4,5-tetrahydrodipicolinate + NAD(+) + H2O = (2S,4S)-4-hydroxy-2,3,4,5-tetrahydrodipicolinate + NADH + H(+). It carries out the reaction (S)-2,3,4,5-tetrahydrodipicolinate + NADP(+) + H2O = (2S,4S)-4-hydroxy-2,3,4,5-tetrahydrodipicolinate + NADPH + H(+). It participates in amino-acid biosynthesis; L-lysine biosynthesis via DAP pathway; (S)-tetrahydrodipicolinate from L-aspartate: step 4/4. Catalyzes the conversion of 4-hydroxy-tetrahydrodipicolinate (HTPA) to tetrahydrodipicolinate. In Shewanella sp. (strain MR-4), this protein is 4-hydroxy-tetrahydrodipicolinate reductase.